Here is a 245-residue protein sequence, read N- to C-terminus: 23S rRNA (guanosine-2'-O-)-methyltransferase RlmB (245 aa).

Residues Gly-197, Ile-217, and Leu-226 each contribute to the S-adenosyl-L-methionine site.

The protein belongs to the class IV-like SAM-binding methyltransferase superfamily. RNA methyltransferase TrmH family. RlmB subfamily.

The protein resides in the cytoplasm. It catalyses the reaction guanosine(2251) in 23S rRNA + S-adenosyl-L-methionine = 2'-O-methylguanosine(2251) in 23S rRNA + S-adenosyl-L-homocysteine + H(+). In terms of biological role, specifically methylates the ribose of guanosine 2251 in 23S rRNA. This chain is 23S rRNA (guanosine-2'-O-)-methyltransferase RlmB, found in Bordetella parapertussis (strain 12822 / ATCC BAA-587 / NCTC 13253).